Consider the following 336-residue polypeptide: Ventral anterior homeobox 1 (336 aa).

Over residues 1–34 the composition is skewed to basic and acidic residues; the sequence is MFGKTDKMDVRCHSDTEAARVSKNAHKESREIKG. 2 disordered regions span residues 1 to 39 and 50 to 69; these read MFGK…EGSL and AFSA…NSSA. A DNA-binding region (homeobox) is located at residues 100–159; sequence PKRTRTSFTAEQLYRLEMEFQRCQYVVGRERTELARQLNLSETQVKVWFQNRRTKQKKDQ. Low complexity predominate over residues 236–250; that stretch reads PGPAGAASQHPPAVG. Disordered stretches follow at residues 236 to 267 and 316 to 336; these read PGPA…HAGA and SAFE…KALD. Basic and acidic residues predominate over residues 325 to 336; it reads NNKEGAEKKALD.

The protein belongs to the EMX homeobox family.

The protein localises to the nucleus. Transcription factor that may function in dorsoventral specification of the forebrain. Required for axon guidance and major tract formation in the developing forebrain. May contribute to the differentiation of the neuroretina, pigmented epithelium and optic stalk. In Rattus norvegicus (Rat), this protein is Ventral anterior homeobox 1 (Vax1).